The primary structure comprises 1005 residues: Defense-associated sirtuin 2 (1005 aa).

Residues 1–295 (MVKVDLESKR…YSAVMDLLIE (295 aa)) form an SIR2 region. The tract at residues 56 to 111 (YPQWWRLVDKYHEELYGSPKKGNYSSDEYLRIPQIFYNVKGEMAFDGILKDFFQVD) is inter-dimer interaction. Active-site residues include Tyr134, Asp135, and His171. An MID region spans residues 296-548 (SQENKFITKD…YKILEFLSDN (253 aa)). Residues 549–1005 (QFLYDDTVKL…YLEILMNYFI (457 aa)) form a CTD region.

As to quaternary structure, homotetramer (dimer of dimers). Homodimer. The SIR2 domains are arranged in a central core, adopting a head-to-head arrangement, while the CTDs are positioned at the periphery of the complex. Tetramerization is necessary for the activation of NADase activity. The NADase enzymatic activity of this homotetrameric form is autoinhibited. The activated form of DSR2 (after binding to the phage tube protein) exists as tetramers and dimers, with the tetramers exhibiting more NADase activity. Each tetramer binds 4 NAD(+) molecules. (Microbial infection) Interacts (via C-terminus) with phage SPR tail tube monomer protein (via N-terminus) in a 4:4 DSR2-Tube assembly; this interaction induces a conformation change of the tube protein and activates the NADase activity of DSR2. In terms of assembly, (Microbial infection) Interacts (via C-terminus) with phage SPbeta DSAD1 in a 4:2 ratio; this interaction prevents activation of the NADase defense activity of DSR2.

It catalyses the reaction NAD(+) + H2O = ADP-D-ribose + nicotinamide + H(+). Its activity is regulated as follows. (Microbial infection) NADase activity is activated through the binding of SPR phage tail tube monomer protein. NADase activity is inhibited through the binding to the phage SPbeta DSR anti-defense 1 (DSAD1). Its function is as follows. Anti-phage defense protein that is activated through the binding to the phage tail tube protein monomer and which hydrolyzes NAD+ upon activation (NADase activity). The resulting depletion of NAD(+) leads to an abortive infection. The polypeptide is Defense-associated sirtuin 2 (Bacillus subtilis).